The chain runs to 62 residues: Large ribosomal subunit protein bL28 (62 aa).

This sequence belongs to the bacterial ribosomal protein bL28 family.

This chain is Large ribosomal subunit protein bL28, found in Caldicellulosiruptor bescii (strain ATCC BAA-1888 / DSM 6725 / KCTC 15123 / Z-1320) (Anaerocellum thermophilum).